The chain runs to 528 residues: Catalase (528 aa).

A compositionally biased stretch (basic and acidic residues) spans 1–22 (MADRREKSADQMKLWKESRANQ). The disordered stretch occupies residues 1-32 (MADRREKSADQMKLWKESRANQKPDVLTTGGG). Catalysis depends on residues His75 and Asn148. The NADP(+) site is built by His194, Ser201, Arg203, Asn213, Lys237, Trp303, His305, and Lys306. Tyr358 is a binding site for heme. A Microbody targeting signal; atypical motif is present at residues 525-528 (KANL).

The protein belongs to the catalase family. Homotetramer. The cofactor is heme. It depends on NADP(+) as a cofactor.

The protein localises to the peroxisome matrix. The catalysed reaction is 2 H2O2 = O2 + 2 H2O. Catalyzes the degradation of hydrogen peroxide (H(2)O(2)) generated by peroxisomal oxidases to water and oxygen, thereby protecting cells from the toxic effects of hydrogen peroxide. The polypeptide is Catalase (cat) (Glandirana rugosa (Japanese wrinkled frog)).